Reading from the N-terminus, the 352-residue chain is UDP-3-O-acylglucosamine N-acyltransferase (352 aa).

The active-site Proton acceptor is the His-244.

Belongs to the transferase hexapeptide repeat family. LpxD subfamily. As to quaternary structure, homotrimer.

The catalysed reaction is a UDP-3-O-[(3R)-3-hydroxyacyl]-alpha-D-glucosamine + a (3R)-hydroxyacyl-[ACP] = a UDP-2-N,3-O-bis[(3R)-3-hydroxyacyl]-alpha-D-glucosamine + holo-[ACP] + H(+). Its pathway is bacterial outer membrane biogenesis; LPS lipid A biosynthesis. Catalyzes the N-acylation of UDP-3-O-acylglucosamine using 3-hydroxyacyl-ACP as the acyl donor. Is involved in the biosynthesis of lipid A, a phosphorylated glycolipid that anchors the lipopolysaccharide to the outer membrane of the cell. The polypeptide is UDP-3-O-acylglucosamine N-acyltransferase (Leptospira biflexa serovar Patoc (strain Patoc 1 / Ames)).